The primary structure comprises 291 residues: Cell division protein ZipA (291 aa).

Residues 1 to 5 (MQELR) are Periplasmic-facing. A helical membrane pass occupies residues 6 to 26 (FVLIIVGALAIAALLFHGLWT). The Cytoplasmic segment spans residues 27-291 (SKKEGKSKFG…QEFKVRAAQA (265 aa)). Positions 29 to 51 (KEGKSKFGDKPLRKMKVESDDPP) are enriched in basic and acidic residues. Disordered stretches follow at residues 29-61 (KEGK…EDDF) and 92-119 (ELDE…VQPQ).

It belongs to the ZipA family. Interacts with FtsZ via their C-terminal domains.

It is found in the cell inner membrane. Its function is as follows. Essential cell division protein that stabilizes the FtsZ protofilaments by cross-linking them and that serves as a cytoplasmic membrane anchor for the Z ring. Also required for the recruitment to the septal ring of downstream cell division proteins. This is Cell division protein ZipA from Vibrio cholerae serotype O1 (strain ATCC 39541 / Classical Ogawa 395 / O395).